A 310-amino-acid chain; its full sequence is p-hydroxybenzoic acid efflux pump subunit AaeA (310 aa).

A helical transmembrane segment spans residues 12 to 32 (AITVVLVILAFIAIFNAWVYY).

The protein belongs to the membrane fusion protein (MFP) (TC 8.A.1) family.

Its subcellular location is the cell inner membrane. In terms of biological role, forms an efflux pump with AaeB. This is p-hydroxybenzoic acid efflux pump subunit AaeA from Escherichia coli O8 (strain IAI1).